Consider the following 261-residue polypeptide: Zinc finger protein 664 (261 aa).

C2H2-type zinc fingers lie at residues 3 to 25, 31 to 53, 59 to 81, 87 to 109, 115 to 137, 143 to 165, 171 to 193, 199 to 221, and 227 to 249; these read YKCP…QKVH, HKCD…WRDH, YKCD…KKIH, YKCY…MRVH, YVCS…QRVH, FKCE…QRVH, YKCY…QRVH, YRCC…QRVH, and FKCD…QRVH. A Glycyl lysine isopeptide (Lys-Gly) (interchain with G-Cter in SUMO2) cross-link involves residue K257.

This sequence belongs to the krueppel C2H2-type zinc-finger protein family. Expressed in the organ of Corti, stria vascularis, auditory nerve and retina. Lower levels in the tongue, cerebellum, small intestine and kidney.

It is found in the nucleus. May be involved in transcriptional regulation. The sequence is that of Zinc finger protein 664 (ZNF664) from Cavia porcellus (Guinea pig).